A 577-amino-acid polypeptide reads, in one-letter code: uncharacterized protein (577 aa).

Composition is skewed to polar residues over residues 1-21 (MSSTPTAEELALQNTVSQSAS) and 68-87 (SFQNLTPVNSNPSNQNSKTE). 2 disordered regions span residues 1–24 (MSSTPTAEELALQNTVSQSASAHP) and 68–93 (SFQNLTPVNSNPSNQNSKTEPNPDDV). 12 helical membrane passes run 139-159 (CILAYVALCSSFASSVFAVPA), 174-194 (LLTMTVFLLGYCSGPIIWAPL), 204-224 (ILIGMLGFGIFNISVAVGKDI), 232-252 (FFAGFFASAPLTVVAAALADM), 262-282 (ITLFSAMVFDGPLVSPIVGGF), 292-312 (WTEYITSFMGFFALIIVYLFC), 367-387 (PICFLITLYSSFVYAILYLLL), 402-422 (MGVAELPYIGLLVGVFIGSGI), 447-467 (LPPMMIGCFMFPAGIFWLSWS), 473-493 (VNWVVPALSGLATGCGILLIF), 504-526 (YLFRAASAIAANTIMRSAMAAGF), and 543-563 (GSLLGFIATALIPMPFVFFFF).

Belongs to the major facilitator superfamily. CAR1 family.

Its subcellular location is the endoplasmic reticulum. It is found in the membrane. This is an uncharacterized protein from Schizosaccharomyces pombe (strain 972 / ATCC 24843) (Fission yeast).